Consider the following 293-residue polypeptide: Protein phosphatase 1 regulatory subunit 3B (293 aa).

Residues 129–237 (RQRIENDHVC…NNQGKNYRII (109 aa)) form the CBM21 domain.

Interacts with glycogen, PPP1CC catalytic subunit of PP1 and PYGL. Associates with glycogen particles. Forms complexes with debranching enzyme, glycogen phosphorylase, glycogen synthase and phosphorylase kinase which is necessary for its regulation of PP1 activity.

Functionally, acts as a glycogen-targeting subunit for phosphatase PP1. Facilitates interaction of the PP1 with enzymes of the glycogen metabolism and regulates its activity. Suppresses the rate at which PP1 dephosphorylates (inactivates) glycogen phosphorylase and enhances the rate at which it activates glycogen synthase and therefore limits glycogen breakdown. The chain is Protein phosphatase 1 regulatory subunit 3B (ppp1r3b) from Danio rerio (Zebrafish).